A 342-amino-acid polypeptide reads, in one-letter code: Phosphate acyltransferase (342 aa).

The protein belongs to the PlsX family. As to quaternary structure, homodimer. Probably interacts with PlsY.

It is found in the cytoplasm. It catalyses the reaction a fatty acyl-[ACP] + phosphate = an acyl phosphate + holo-[ACP]. The protein operates within lipid metabolism; phospholipid metabolism. In terms of biological role, catalyzes the reversible formation of acyl-phosphate (acyl-PO(4)) from acyl-[acyl-carrier-protein] (acyl-ACP). This enzyme utilizes acyl-ACP as fatty acyl donor, but not acyl-CoA. The chain is Phosphate acyltransferase from Shewanella woodyi (strain ATCC 51908 / MS32).